The chain runs to 326 residues: Siroheme decarboxylase NirDL subunit (326 aa).

It belongs to the Ahb/Nir family. Forms a complex composed of NirDL, NirG and NirH. All proteins are required for the total conversion of siroheme to didecarboxysiroheme.

The enzyme catalyses siroheme + 2 H(+) = 12,18-didecarboxysiroheme + 2 CO2. Its pathway is porphyrin-containing compound metabolism. Involved in heme d1 biosynthesis. Catalyzes the decarboxylation of siroheme into didecarboxysiroheme. Siroheme is probably decarboxylated to monodecarboxysiroheme, which is in turn decarboxylated to didecarboxysiroheme. The polypeptide is Siroheme decarboxylase NirDL subunit (Paracoccus pantotrophus (Thiosphaera pantotropha)).